The sequence spans 91 residues: Soluble cytochrome b558 (91 aa).

Residues 8–88 form the Cytochrome b5 heme-binding domain; it reads LPVFTLEQVA…LQRYLIGTLE (81 aa). C25 and C54 form a disulfide bridge. Residues H43 and H71 each coordinate heme.

The chain is Soluble cytochrome b558 from Ectothiorhodospira shaposhnikovii (Ectothiorhodospira vacuolata).